The primary structure comprises 1870 residues: Non-reducing polyketide synthase pkgA (1870 aa).

Positions 40-279 (IQDLIRRLHR…SRHSALPISG (240 aa)) are N-terminal acylcarrier protein transacylase domain (SAT). Residues 416 to 838 (DAKLAVVGMA…GGNTTLLLED (423 aa)) form the Ketosynthase family 3 (KS3) domain. Residues 453–492 (PPDRFDLDAHFDPSGEKENTTTKGSQSNRPLSRQAEQTDP) form a disordered region. The segment covering 455 to 472 (DRFDLDAHFDPSGEKENT) has biased composition (basic and acidic residues). Positions 473-492 (TTKGSQSNRPLSRQAEQTDP) are enriched in polar residues. Catalysis depends on for beta-ketoacyl synthase activity residues Cys-577, His-712, and His-755. Residues 947-1282 (AFSGQGCLYH…QSFASLRRGD (336 aa)) form a malonyl-CoA:ACP transacylase (MAT) domain region. The interval 1004–1027 (RCPHRESTPSSDASHDSNTNRTST) is disordered. Residues 1011-1027 (TPSSDASHDSNTNRTST) are compositionally biased toward polar residues. Residues 1364-1704 (TSSVQQIIFE…PRALMPVLFP (341 aa)) form a product template (PT) domain region. The interval 1368-1502 (QQIIFEEYDE…ATVCYEEAQD (135 aa)) is N-terminal hotdog fold. The PKS/mFAS DH domain occupies 1368–1700 (QQIIFEEYDE…FKAVPRALMP (333 aa)). Residue His-1400 is the Proton acceptor; for dehydratase activity of the active site. Residues 1538 to 1700 (KGGPRVNNFF…FKAVPRALMP (163 aa)) are C-terminal hotdog fold. Asp-1602 functions as the Proton donor; for dehydratase activity in the catalytic mechanism. The Carrier domain maps to 1795 to 1870 (QSQNAQATAC…VQDLVTWLSK (76 aa)). Residue Ser-1832 is modified to O-(pantetheine 4'-phosphoryl)serine.

Requires pantetheine 4'-phosphate as cofactor.

The catalysed reaction is holo-[ACP] + 6 malonyl-CoA + acetyl-CoA + 6 H(+) = 3,5,7,9,11,13-hexaoxotetradecanoyl-[ACP] + 6 CO2 + 7 CoA. It carries out the reaction holo-[ACP] + 5 malonyl-CoA + acetyl-CoA + 5 H(+) = 3,5,7,9,11-pentaoxododecanoyl-[ACP] + 5 CO2 + 6 CoA. The protein operates within secondary metabolite biosynthesis. Its function is as follows. Non-reducing polyketide synthase; part of the pkg gene cluster that mediates the biosynthesis of dihydrocitreoisocoumarin and 6,8-dihydroxy-3-(2-oxopropyl)-isocoumarin. The non-reducing polyketide synthase pkgA performs the condensation of one acetyl-CoA starter unit with 6 and 5 malonyl-CoA units, respectively. As pkgA lacks a releasing domain, the thioesterase pkgB is necessary to break the thioester bond and release dihydrocitreoisocoumarin and 6,8-dihydroxy-3-(2-oxopropyl)-isocoumarin from pkgA. This chain is Non-reducing polyketide synthase pkgA, found in Emericella nidulans (strain FGSC A4 / ATCC 38163 / CBS 112.46 / NRRL 194 / M139) (Aspergillus nidulans).